A 334-amino-acid chain; its full sequence is Phosphate acyltransferase (334 aa).

This sequence belongs to the PlsX family. As to quaternary structure, homodimer. Probably interacts with PlsY.

The protein resides in the cytoplasm. It carries out the reaction a fatty acyl-[ACP] + phosphate = an acyl phosphate + holo-[ACP]. It participates in lipid metabolism; phospholipid metabolism. Catalyzes the reversible formation of acyl-phosphate (acyl-PO(4)) from acyl-[acyl-carrier-protein] (acyl-ACP). This enzyme utilizes acyl-ACP as fatty acyl donor, but not acyl-CoA. This is Phosphate acyltransferase from Clostridium tetani (strain Massachusetts / E88).